Consider the following 388-residue polypeptide: MFSLIGAKRQAIGIAALAWSTGAVMASEHWPDLPVGIKNGAAARIGNMAYVGLGSAGTDFYALDLNNPSKGWVKRANFIGPATNGAAMAAAGGKIFAFSGNGKATPDAKSPIIFDTAYVYDPGSDGWSKLDTQTPVGLSGAKAVGLADGRIAIFGGYNKELFDKYLADVGAIDKDKEPEAYRKLVDSYMGMKPEAYRWNDEVLVYDPAGNNWGSLGANPFLPNCDPAMATMGEGDFLLVSGGIKPGLRTPEAKLVKIRDGAAHWQKVSDLPPLSSSEPQEGVAGAYAGKAGDDVLVAGGANFKGAQANAAAGKWFAHDGLAKSWRDDVYAFDGKDWKVAGKLPRGLAYGAAFDAPGGLLVVGGEDRDGKARKEVFLLKWDGKALSVEN.

A signal peptide spans 1-26; that stretch reads MFSLIGAKRQAIGIAALAWSTGAVMA. 7 Kelch repeats span residues 48–92, 94–147, 149–186, 187–232, 236–285, 307–356, and 358–387; these read MAYV…AAAG, KIFA…VGLA, GRIA…KLVD, SYMG…ATMG, FLLV…VAGA, ANAA…DAPG, and LLVV…LSVE.

This sequence belongs to the NanM family. In terms of assembly, homodimer.

It localises to the periplasm. It carries out the reaction N-acetyl-alpha-neuraminate = N-acetyl-beta-neuraminate. In terms of biological role, converts alpha-N-acetylneuranimic acid (Neu5Ac) to the beta-anomer, accelerating the equilibrium between the alpha- and beta-anomers. Probably facilitates sialidase-negative bacteria to compete successfully for limited amounts of extracellular Neu5Ac, which is likely taken up in the beta-anomer. In addition, the rapid removal of sialic acid from solution might be advantageous to the bacterium to damp down host responses. The sequence is that of N-acetylneuraminate epimerase from Brucella suis (strain ATCC 23445 / NCTC 10510).